We begin with the raw amino-acid sequence, 507 residues long: Protein DETOXIFICATION 41 (507 aa).

The Cytoplasmic portion of the chain corresponds to 1 to 62 (MSSTETYEPL…KLLWTLSGAS (62 aa)). Residues 63–83 (IVVSVLNYMLSFVTVMFTGHL) traverse the membrane as a helical segment. Over 84-92 (GSLQLAGAS) the chain is Vacuolar. The helical transmembrane segment at 93-113 (IATVGIQGLAYGIMLGMASAV) threads the bilayer. Residues 114 to 137 (QTVCGQAYGARQYSSMGIICQRAM) are Cytoplasmic-facing. The chain crosses the membrane as a helical span at residues 138 to 158 (VLHLAAAVFLTFLYWYSGPIL). Residues 159–170 (KTMGQSVAIAHE) are Vacuolar-facing. Residues 171–191 (GQIFARGMIPQIYAFALACPM) form a helical membrane-spanning segment. The Cytoplasmic segment spans residues 192–202 (QRFLQAQNIVN). The chain crosses the membrane as a helical span at residues 203 to 223 (PLAYMSLGVFLLHTLLTWLVT). Position 224 (Asn-224) is a topological domain, vacuolar. A helical transmembrane segment spans residues 225 to 245 (VLDFGLLGAALILSFSWWLLV). The Cytoplasmic segment spans residues 246-283 (AVNGMYILMSPNCKETWTGFSTRAFRGIWPYFKLTVAS). Residues 284–304 (AVMLCLEIWYNQGLVIISGLL) form a helical membrane-spanning segment. At 305-312 (SNPTISLD) the chain is on the vacuolar side. The chain crosses the membrane as a helical span at residues 313–333 (AISICMYYLNWDMQFMLGLSA). Residues 334–355 (AISVRVSNELGAGNPRVAMLSV) are Cytoplasmic-facing. A helical transmembrane segment spans residues 356 to 376 (VVVNITTVLISSVLCVIVLVF). Over 377-389 (RVGLSKAFTSDAE) the chain is Vacuolar. Residues 390–410 (VIAAVSDLFPLLAVSIFLNGI) traverse the membrane as a helical segment. The Cytoplasmic segment spans residues 411 to 425 (QPILSGVAIGSGWQA). A helical membrane pass occupies residues 426–446 (VVAYVNLVTYYVIGLPIGCVL). Residues 447–453 (GFKTSLG) are Vacuolar-facing. A helical transmembrane segment spans residues 454–474 (VAGIWWGMIAGVILQTLTLIV). The Cytoplasmic portion of the chain corresponds to 475 to 507 (LTLKTNWTSEVENAAQRVKTSATENQEMANAGV).

It belongs to the multi antimicrobial extrusion (MATE) (TC 2.A.66.1) family. Expressed in reproductive tissues, from buds to siliques. Restricted to the endothelium layer of the ovule and the seed coat.

Its subcellular location is the vacuole membrane. It participates in secondary metabolite biosynthesis; flavonoid biosynthesis. Its function is as follows. Acts as a flavonoid/H(+)-antiporter that control the vacuolar sequestration of flavonoids in the seed coat endothelium. Could transport the anthocyanin cyanidin-3-O-glucoside and epicatechin 3'-O-glucoside in vitro. This is Protein DETOXIFICATION 41 from Arabidopsis thaliana (Mouse-ear cress).